Reading from the N-terminus, the 74-residue chain is ATP synthase F(1) complex subunit epsilon, mitochondrial (74 aa).

The protein belongs to the eukaryotic ATPase epsilon family. In terms of assembly, component of the ATP synthase complex composed at least of ATP5F1A/subunit alpha, ATP5F1B/subunit beta, ATP5MC1/subunit c (homooctomer), MT-ATP6/subunit a, MT-ATP8/subunit 8, ATP5ME/subunit e, ATP5MF/subunit f, ATP5MG/subunit g, ATP5MK/subunit k, ATP5MJ/subunit j, ATP5F1C/subunit gamma, ATP5F1D/subunit delta, ATP5F1E/subunit epsilon, ATP5PF/subunit F6, ATP5PB/subunit b, ATP5PD/subunit d, ATP5PO/subunit OSCP. ATP synthase complex consists of a soluble F(1) head domain (subunits alpha(3) and beta(3)) - the catalytic core - and a membrane F(0) domain - the membrane proton channel (subunits c, a, 8, e, f, g, k and j). These two domains are linked by a central stalk (subunits gamma, delta, and epsilon) rotating inside the F1 region and a stationary peripheral stalk (subunits F6, b, d, and OSCP).

It is found in the mitochondrion. The protein resides in the mitochondrion inner membrane. Subunit epsilon, of the mitochondrial membrane ATP synthase complex (F(1)F(0) ATP synthase or Complex V) that produces ATP from ADP in the presence of a proton gradient across the membrane which is generated by electron transport complexes of the respiratory chain. ATP synthase complex consist of a soluble F(1) head domain - the catalytic core - and a membrane F(1) domain - the membrane proton channel. These two domains are linked by a central stalk rotating inside the F(1) region and a stationary peripheral stalk. During catalysis, ATP synthesis in the catalytic domain of F(1) is coupled via a rotary mechanism of the central stalk subunits to proton translocation. In vivo, can only synthesize ATP although its ATP hydrolase activity can be activated artificially in vitro. May be essential for the assembly of F(1) and may play an important role in the incorporation of the hydrophobic subunit c into the F(1)-c oligomer rotor of the mitochondrial ATP synthase complex. This chain is ATP synthase F(1) complex subunit epsilon, mitochondrial, found in Dictyostelium discoideum (Social amoeba).